Consider the following 227-residue polypeptide: Ion-translocating oxidoreductase complex subunit E (227 aa).

The next 5 membrane-spanning stretches (helical) occupy residues Ala-34–Ser-56, Ile-68–Ala-88, Phe-91–Val-111, Phe-127–Ile-147, and Thr-181–Ile-201.

This sequence belongs to the NqrDE/RnfAE family. In terms of assembly, the complex is composed of six subunits: RnfA, RnfB, RnfC, RnfD, RnfE and RnfG.

It localises to the cell inner membrane. Its function is as follows. Part of a membrane-bound complex that couples electron transfer with translocation of ions across the membrane. This chain is Ion-translocating oxidoreductase complex subunit E, found in Buchnera aphidicola subsp. Acyrthosiphon pisum (strain APS) (Acyrthosiphon pisum symbiotic bacterium).